We begin with the raw amino-acid sequence, 299 residues long: MKTLQSTLLLFLFVPLIKPAPPSQQDSRIIYDYGTDNLEETFFSQDYEDKYLDGKSTKEKETMIIVPDEKSFQLQKDETITPLPPKKENDEMPTCLLCVCLSGSVYCEEVDIDAVPPLPKESAYLYARFNKIKKLTAKDFADIPNLRRLDFTGNLIEDIEDGTFSKLSLLEELTLAENQLLKLPVLPPKLTLFNAKYNKIKSRGIKANTFKKLHNLSFLYLDHNALESVPLNLPESLRVIHLQFNNITSITDDTFCKANDTSYIRDRIEEIRLEGNPVILGKHPNSFICLKRLPIGSYI.

Residues Met-1–Pro-19 form the signal peptide. N-linked (GlcNAc...) (keratan sulfate) asparagine glycosylation occurs at Asn-89. LRR repeat units follow at residues Asp-113–Ile-132, Lys-133–Ile-156, Glu-157–Leu-180, Leu-181–Ile-200, Lys-201–Leu-226, Glu-227–Ile-247, and Thr-248–Val-278. An N-linked (GlcNAc...) (keratan sulfate) asparagine glycan is attached at Asn-215. Asn-246 carries N-linked (GlcNAc...) asparagine glycosylation. Cysteines 256 and 289 form a disulfide. N-linked (GlcNAc...) (keratan sulfate) asparagine glycosylation is present at Asn-259.

This sequence belongs to the small leucine-rich proteoglycan (SLRP) family. SLRP class III subfamily. In terms of processing, contains keratan sulfate. Keratan sulfate attachment is observed in the cornea but the protein also exists in other tissues without keratan sulfate. The 12 kDa OIF in bone and the 25 kDa KSPG25 protein in cornea are probably proteolytic fragments. Bone and cornea.

The protein resides in the secreted. It is found in the extracellular space. It localises to the extracellular matrix. Induces bone formation in conjunction with TGF-beta-1 or TGF-beta-2. The chain is Mimecan (OGN) from Bos taurus (Bovine).